The sequence spans 89 residues: Small ribosomal subunit protein bS20 (89 aa).

It belongs to the bacterial ribosomal protein bS20 family.

Its function is as follows. Binds directly to 16S ribosomal RNA. The protein is Small ribosomal subunit protein bS20 of Helicobacter pylori (strain ATCC 700392 / 26695) (Campylobacter pylori).